The chain runs to 121 residues: Flagellar protein FliT (121 aa).

A required for homodimerization region spans residues 1-50 (MNNAPHLYFAWQQLVEKSQLMLRLATEEQWDELIASEMAYVNAVQEIAHL). Residues 60–98 (MQEQLRPMLLLILDNESKVKQLLQIRMDELAKLVGQSSV) are fliD binding.

Belongs to the FliT family. Homodimer. Interacts with FliD and FlhC.

The protein resides in the cytoplasm. It localises to the cytosol. Functionally, dual-function protein that regulates the transcription of class 2 flagellar operons and that also acts as an export chaperone for the filament-capping protein FliD. As a transcriptional regulator, acts as an anti-FlhDC factor; it directly binds FlhC, thus inhibiting the binding of the FlhC/FlhD complex to class 2 promoters, resulting in decreased expression of class 2 flagellar operons. As a chaperone, effects FliD transition to the membrane by preventing its premature polymerization, and by directing it to the export apparatus. The chain is Flagellar protein FliT from Escherichia coli O6:K15:H31 (strain 536 / UPEC).